We begin with the raw amino-acid sequence, 309 residues long: NAD kinase 2 (309 aa).

The Proton acceptor role is filled by aspartate 81. Residues 81-82, 155-156, aspartate 185, 196-201, and asparagine 255 contribute to the NAD(+) site; these read DG, NE, and TAYALS.

It belongs to the NAD kinase family. A divalent metal cation is required as a cofactor.

It is found in the cytoplasm. The enzyme catalyses NAD(+) + ATP = ADP + NADP(+) + H(+). Functionally, involved in the regulation of the intracellular balance of NAD and NADP, and is a key enzyme in the biosynthesis of NADP. Catalyzes specifically the phosphorylation on 2'-hydroxyl of the adenosine moiety of NAD to yield NADP. In Gloeobacter violaceus (strain ATCC 29082 / PCC 7421), this protein is NAD kinase 2.